Consider the following 462-residue polypeptide: MNWTVDIPIDQLPSLPPLPTDLRTRLDAALAKPAAQQPTWPADQALAMRTVLESVPPVTVPSEIVRLQEQLAQVAKGEAFLLQGGDCAETFMDNTEPHIRGNVRALLQMAVVLTYGASMPVVKVARIAGQYAKPRSADIDALGLRSYRGDMINGFAPDAAAREHDPSRLVRAYANASAAMNLVRALTSSGLASLHLVHDWNREFVRTSPAGARYEALATEIDRGLRFMSACGVADRNLQTAEIYASHEALVLDYERAMLRLSDGDDGEPQLFDLSAHTVWIGERTRQIDGAHIAFAQVIANPVGVKLGPNMTPELAVEYVERLDPHNKPGRLTLVSRMGNHKVRDLLPPIVEKVQATGHQVIWQCDPMHGNTHESSTGFKTRHFDRIVDEVQGFFEVHRALGTHPGGIHVEITGENVTECLGGAQDISETDLAGRYETACDPRLNTQQSLELAFLVAEMLRD.

A Mn(2+)-binding site is contributed by Cys87. Phosphoenolpyruvate is bound by residues Arg126, 283–284 (ER), Lys306, and Arg337. Mn(2+) is bound by residues His369, Glu411, and Asp441.

In terms of assembly, homodimer. Interacts with Rv0948c. The cofactor is Mn(2+). It depends on Co(2+) as a cofactor. Cd(2+) serves as cofactor.

It catalyses the reaction D-erythrose 4-phosphate + phosphoenolpyruvate + H2O = 7-phospho-2-dehydro-3-deoxy-D-arabino-heptonate + phosphate. It participates in metabolic intermediate biosynthesis; chorismate biosynthesis; chorismate from D-erythrose 4-phosphate and phosphoenolpyruvate: step 1/7. With respect to regulation, feedback inhibited by tryptophan, tyrosine, phenylalanine and chorismate. Its function is as follows. Catalyzes an aldol-like condensation reaction between phosphoenolpyruvate (PEP) and D-erythrose 4-phosphate (E4P) to generate 3-deoxy-D-arabino-heptulosonate 7-phosphate (DAH7P) and inorganic phosphate. This is Phospho-2-dehydro-3-deoxyheptonate aldolase AroG (aroG) from Mycobacterium tuberculosis (strain ATCC 25618 / H37Rv).